The chain runs to 454 residues: UPF0210 protein BLA_0552 (454 aa).

The protein belongs to the UPF0210 family. In terms of assembly, homodimer.

The sequence is that of UPF0210 protein BLA_0552 from Bifidobacterium animalis subsp. lactis (strain AD011).